The chain runs to 101 residues: Small ribosomal subunit protein uS14 (101 aa).

Positions 1 to 10 (MAKKSSIEKN) are enriched in basic and acidic residues. The interval 1–25 (MAKKSSIEKNNRRKKMAKNAAPKRE) is disordered.

This sequence belongs to the universal ribosomal protein uS14 family. As to quaternary structure, part of the 30S ribosomal subunit. Contacts proteins S3 and S10.

Its function is as follows. Binds 16S rRNA, required for the assembly of 30S particles and may also be responsible for determining the conformation of the 16S rRNA at the A site. This is Small ribosomal subunit protein uS14 from Rhodopseudomonas palustris (strain BisA53).